We begin with the raw amino-acid sequence, 213 residues long: Pyridoxine/pyridoxamine 5'-phosphate oxidase (213 aa).

Substrate is bound by residues 10–13 (REEY) and Lys68. Residues 63–68 (RMLLLK), 78–79 (FT), Lys85, and Gln107 each bind FMN. Residues Tyr125, Arg129, and Ser133 each coordinate substrate. Residues 142–143 (QS) and Trp186 contribute to the FMN site. 192-194 (RLH) serves as a coordination point for substrate. Arg196 lines the FMN pocket.

Belongs to the pyridoxamine 5'-phosphate oxidase family. Homodimer. FMN is required as a cofactor.

It carries out the reaction pyridoxamine 5'-phosphate + O2 + H2O = pyridoxal 5'-phosphate + H2O2 + NH4(+). The enzyme catalyses pyridoxine 5'-phosphate + O2 = pyridoxal 5'-phosphate + H2O2. It participates in cofactor metabolism; pyridoxal 5'-phosphate salvage; pyridoxal 5'-phosphate from pyridoxamine 5'-phosphate: step 1/1. The protein operates within cofactor metabolism; pyridoxal 5'-phosphate salvage; pyridoxal 5'-phosphate from pyridoxine 5'-phosphate: step 1/1. Catalyzes the oxidation of either pyridoxine 5'-phosphate (PNP) or pyridoxamine 5'-phosphate (PMP) into pyridoxal 5'-phosphate (PLP). In Nocardioides sp. (strain ATCC BAA-499 / JS614), this protein is Pyridoxine/pyridoxamine 5'-phosphate oxidase.